We begin with the raw amino-acid sequence, 240 residues long: Putative exosome complex component RRP41 (240 aa).

The protein belongs to the RNase PH family. As to quaternary structure, component of the RNA exosome complex.

It is found in the cytoplasm. It localises to the nucleus. Its subcellular location is the nucleolus. The protein resides in the nucleoplasm. Its function is as follows. Non-catalytic component of the RNA exosome complex which has 3'-&gt;5' exoribonuclease activity and participates in a multitude of cellular RNA processing and degradation events. In Caenorhabditis briggsae, this protein is Putative exosome complex component RRP41 (exos-4.1).